Here is a 99-residue protein sequence, read N- to C-terminus: A-type ATP synthase subunit F (99 aa).

This sequence belongs to the V-ATPase F subunit family. Has multiple subunits with at least A(3), B(3), C, D, E, F, H, I and proteolipid K(x).

The protein localises to the cell membrane. Component of the A-type ATP synthase that produces ATP from ADP in the presence of a proton gradient across the membrane. The polypeptide is A-type ATP synthase subunit F (Methanococcus maripaludis (strain C5 / ATCC BAA-1333)).